Reading from the N-terminus, the 868-residue chain is Metabotropic glutamate receptor 6 (868 aa).

A signal peptide spans 1–20 (MARLLLALLAWLAQMSPVRA). At 21–576 (AGSVRLAGGL…VVRLTWSSPW (556 aa)) the chain is on the extracellular side. Cys-48 and Cys-90 are disulfide-bonded. L-glutamate contacts are provided by residues Ser-145, 166–168 (AST), and Tyr-216. 7 disulfide bridges follow: Cys-235–Cys-527, Cys-358–Cys-374, Cys-414–Cys-421, Cys-509–Cys-528, Cys-513–Cys-531, Cys-534–Cys-546, and Cys-549–Cys-562. An N-linked (GlcNAc...) asparagine glycan is attached at Asn-287. Residue Asp-298 participates in L-glutamate binding. Lys-391 contributes to the L-glutamate binding site. N-linked (GlcNAc...) asparagine glycans are attached at residues Asn-442 and Asn-470. Residue Asn-558 is glycosylated (N-linked (GlcNAc...) asparagine). Residues 577 to 599 (AAPPLLLAVLGIMATTTVVGTFV) traverse the membrane as a helical segment. Over 600 to 613 (RHNNTPIVRASGRE) the chain is Cytoplasmic. Residues 614 to 634 (LSYVLLTGIFLIYAVTFLMVA) traverse the membrane as a helical segment. Residues 635–645 (EPGAAVCATRR) are Extracellular-facing. The helical transmembrane segment at 646 to 664 (LFLGLGTTLSYSALLTKTN) threads the bilayer. The Cytoplasmic segment spans residues 665-688 (RIYRIFEQGKRSVTPPPFISPTSQ). A helical membrane pass occupies residues 689-709 (LVITFSLTSLQVVGVIAWLGA). Over 710-739 (QPPHSVIDYEEQRTVDPEQARGVLKCDMSD) the chain is Extracellular. Residues 740-761 (LSLIGCLGYSLLLMVTCTVYAI) form a helical membrane-spanning segment. Over 762–774 (KARGVPETFNEAK) the chain is Cytoplasmic. The chain crosses the membrane as a helical span at residues 775 to 797 (PIGFTMYTTCIVWLAFVPIFFGT). Over 798 to 810 (AQSAEKIYIQTTT) the chain is Extracellular. Residues 811–836 (LTVSLSLSASVSLGMLYVPKTYVILF) traverse the membrane as a helical segment. At 837 to 868 (HPEQNVQKRKRSLKTTSTVAAPPKGADTEDPK) the chain is on the cytoplasmic side. The tract at residues 845-868 (RKRSLKTTSTVAAPPKGADTEDPK) is disordered.

It belongs to the G-protein coupled receptor 3 family. Homodimer. Interacts with GPR179. Interacts with photoreceptor synaptic protein LRIT1 (via its N-terminal extracellular domain).

The protein resides in the cell membrane. It localises to the endoplasmic reticulum membrane. It is found in the golgi apparatus membrane. Its subcellular location is the cell projection. The protein localises to the dendrite. In terms of biological role, G-protein coupled receptor for glutamate. Ligand binding causes a conformation change that triggers signaling via guanine nucleotide-binding proteins (G proteins) and modulates the activity of down-stream effectors, such as adenylate cyclase. Signaling inhibits adenylate cyclase activity. Signaling stimulates TRPM1 channel activity and Ca(2+) uptake. Required for normal vision. The chain is Metabotropic glutamate receptor 6 (GRM6) from Oryctolagus cuniculus (Rabbit).